A 1167-amino-acid chain; its full sequence is mRNA 3'-end-processing protein rna-14 (1167 aa).

Residues 1-245 (MSDDYDPTNI…DPTPVTQPAP (245 aa)) are disordered. 2 stretches are compositionally biased toward acidic residues: residues 16-26 (EEQEDYGEADG) and 70-79 (NTDDVGDDYD). Residues 102–111 (TAPQPAAPVA) are compositionally biased toward low complexity. Residues 124 to 137 (DSDDEDEDGDDDGE) are compositionally biased toward acidic residues. Composition is skewed to low complexity over residues 138–150 (PQQQQQQQQQQQP) and 159–191 (GSGASSSGGSAPAPASASATAAPQSHSPAPQTA). A compositionally biased stretch (polar residues) spans 192–218 (TLTVQDNAGATTFNAPPVPQQVSHQSG). The segment covering 219 to 245 (ATTAAVPTTPSSAAPAVDPTPVTQPAP) has biased composition (low complexity). HAT repeat units lie at residues 277 to 309 (NDIDGARQVYERFLAIFPQAADIWVEYLDLELS), 311 to 342 (NNFPQAEGIFAKCLMTTPNVNLWTRYLDYIRR), 352 to 387 (QARQTVSQAYEFVIDNIGLDKDSGKIWAEYIQFIKF), 401 to 434 (QKMDQLRKAYQRAICVPISNVNTLWKEYDQFEMG), 471 to 504 (TNLPRLPPAPGFDGDQEFMEQVEIWKKWIAWEKS), and 518 to 550 (LYQKRILYVYNQALMALRFWPEMWVDAAQWCFD). Positions 882–893 (QQQPQLPMSQRD) are enriched in polar residues. Disordered stretches follow at residues 882-980 (QQQP…SGAG) and 1075-1167 (AYRE…PPPY). Low complexity predominate over residues 908-922 (SPSAGPGAPFAPYAA). Positions 924–946 (RPLDDRDYDDHPRKIARSEHDPF) are enriched in basic and acidic residues. Over residues 969–979 (GAAGAYSGSGA) the composition is skewed to gly residues. Low complexity predominate over residues 1079-1090 (SPGPLGGRPLSP). Residues 1121–1134 (EPPPAAQYGVPPPA) are compositionally biased toward pro residues. Residues 1135–1151 (QYDGGWAQQQQQQQYGQ) show a composition bias toward low complexity.

Its subcellular location is the nucleus. The protein localises to the cytoplasm. In terms of biological role, component of the cleavage factor IA (CFIA) complex, which is involved in the endonucleolytic cleavage during polyadenylation-dependent pre-mRNA 3'-end formation. The sequence is that of mRNA 3'-end-processing protein rna-14 (rna-14) from Neurospora crassa (strain ATCC 24698 / 74-OR23-1A / CBS 708.71 / DSM 1257 / FGSC 987).